A 339-amino-acid chain; its full sequence is MEYIKFDKARKMDIVPIGRVAIDFNPIDINKPLSESSTFKKYLGGSPANIAVGLARLGKKIGFIGKVSKDQFGEFVVNYFDNEGIDTSQIKYSKNGENLGLTFTEIASPTESSILMYRQGIADLELNVDEIDEEYIKNTKAIVISGTALAKSPSREAALKALELAKRNNTVVIFDVDYRAYNWKNSDEIAIYYSIAGKQSDIIMGSREEFDLMEKLITREKNSDEETAKRWLDYGNKIVVIKHGKEGSTAYTSDGKSYNIKPFPVKLLKSFGGGDAYASAFLYGLLEGWSIIDSLEFGSASAAMLVASHSCSQDMPTVEAIRNFIKEEKEEYGDMVARA.

The protein belongs to the carbohydrate kinase PfkB family.

The catalysed reaction is 5-dehydro-2-deoxy-D-gluconate + ATP = 6-phospho-5-dehydro-2-deoxy-D-gluconate + ADP + H(+). Its pathway is polyol metabolism; myo-inositol degradation into acetyl-CoA; acetyl-CoA from myo-inositol: step 5/7. Catalyzes the phosphorylation of 5-dehydro-2-deoxy-D-gluconate (2-deoxy-5-keto-D-gluconate or DKG) to 6-phospho-5-dehydro-2-deoxy-D-gluconate (DKGP). The polypeptide is 5-dehydro-2-deoxygluconokinase (Clostridium beijerinckii (strain ATCC 51743 / NCIMB 8052) (Clostridium acetobutylicum)).